Reading from the N-terminus, the 188-residue chain is Viral FLICE protein (188 aa).

2 consecutive DED domains span residues 2-74 and 93-169; these read ATYE…DLLH and PYQL…QVQT.

Interacts with host RIPK1, TRAF2, MAP3K14, IKBKB, and IKBKG. Interacts with host CADM1; this interaction is essential for chronic NF-kappa-B activation.

Plays a role in the modulation of host signaling pathways by acting as an activator of both the classic and the alternative NF-kappa-B pathways. Thereby, initiates an important range of cellular processes to promote cell survival, proliferation and protection from apoptosis. This Human herpesvirus 8 type P (isolate GK18) (HHV-8) protein is Viral FLICE protein (ORF71).